We begin with the raw amino-acid sequence, 101 residues long: MAITKMSSLIILSLMMLTFIYIPMISGQFRGIKQCEMKCYSTPECNATCLHEGYEEGKCLKSWDGGVECCCLGLLASSHQDSSPISSPHYIIFHGICILNI.

Residues 1–27 (MAITKMSSLIILSLMMLTFIYIPMISG) form the signal peptide. 4 disulfides stabilise this stretch: cysteine 35–cysteine 71, cysteine 39–cysteine 59, cysteine 45–cysteine 69, and cysteine 49–cysteine 70.

It belongs to the DEFL family.

The protein localises to the secreted. The chain is Putative defensin-like protein 86 (LCR82) from Arabidopsis thaliana (Mouse-ear cress).